Reading from the N-terminus, the 512-residue chain is SNF1-related protein kinase catalytic subunit alpha KIN11 (512 aa).

The region spanning 20 to 272 (YKLGKTLGIG…IPEIRQHRWF (253 aa)) is the Protein kinase domain. Residues 26-34 (LGIGSFGKV) and lysine 49 contribute to the ATP site. Aspartate 143 (proton acceptor) is an active-site residue. Serine 165 carries the post-translational modification Phosphoserine. Threonine 176 carries the post-translational modification Phosphothreonine; by GRIK1 or GRIK2. The interval 291-391 (AKKINEEIVQ…GARSQVPVDR (101 aa)) is auto-inhibitory domain (AID). The region spanning 293-333 (KINEEIVQEVVNMGFDRNQVLESLRNRTQNDATVTYYLLLD) is the UBA domain. The segment at 295-512 (NEEIVQEVVN…AAFLTELRVI (218 aa)) is regulatory domain (RD). The interval 392 to 512 (KWALGLQSHA…AAFLTELRVI (121 aa)) is PPI. Residues 399 to 512 (SHAHPREIMN…AAFLTELRVI (114 aa)) are interaction with PAD1 and SKP1. In terms of domain architecture, KA1 spans 463–511 (AMTSPTVIKFELQLYKAREEKYLLDIQRVNGPQFLFLDLCAAFLTELRV).

It belongs to the protein kinase superfamily. CAMK Ser/Thr protein kinase family. SNF1 subfamily. As to quaternary structure, subunit of a probable heterotrimeric complex consisting of an alpha catalytic (KIN10 or KIN11) subunit, and a beta (KINB) and a gamma (KING or SNF4) non-catalytic regulatory subunits. Interacts with KINB2, KINB3, SNF4 and probably with KINB1 and KING1. Interacts with SKP1/ASK1, PAD1 and the N-terminus of PRL1. Potential subunit of a SCF ubiquitin ligase complex consisting of a SNF1-related protein kinase, SKP1 and CUL1. The association of the SCF complex with the proteasome may be mediated by PAD1 and seems to be inhibited by the interaction with PRL1. Interacts with DSP4. Interacts with the begomovirus AL2 protein and the curtovirus L2 protein. Interacts with ATAF1. Interacts with CIPK14. Interacts with FLZ proteins through their FLZ-type zinc finger domains. Interacts with GEBP/STKR1. Interacts with REM4.1 and REM4.2. Interacts with ADK2. Interacts with IDD8. Interacts with FLZ3, FLZ9, TCP3, TCP13, HB21/ZHD3 and HB23/ZHD10. Interacts with WRI1. Interacts with IPK2b. Interacts with FLZ6 and FLZ10. Sumoylated by SIZ1. Post-translationally, phosphorylated at Thr-176 under submergence. Autophosphorylated. Phosphorylated at Thr-176 by GRIK1/SNAK2 and GRIK2/SNAK1. As to expression, expressed in roots, shoots, flower buds, flowers, siliques and leaves. Restrictly expressed to the base of the leaf, the vascular tissue, and the hydathodes.

The protein resides in the plastid. The protein localises to the chloroplast. Its subcellular location is the cytoplasm. It is found in the endoplasmic reticulum. The catalysed reaction is L-seryl-[protein] + ATP = O-phospho-L-seryl-[protein] + ADP + H(+). The enzyme catalyses L-threonyl-[protein] + ATP = O-phospho-L-threonyl-[protein] + ADP + H(+). With respect to regulation, inactivated by the begomovirus AL2 protein or the curtovirus L2 protein. Activated by phosphorylation at Thr-176 by GRIK1/SNAK2 and GRIK2/SNAK1. Inhibited by trehalose-6-phosphate. Functionally, catalytic subunit of the probable trimeric SNF1-related protein kinase (SnRK) complex, a central regulator of cellular energy homeostasis, which, in response to seemingly unrelated darkness, sugar and stress conditions, activates energy-producing pathways and inhibits energy-consuming processes. May play a role in a signal transduction cascade regulating gene expression and carbohydrate metabolism in higher plants. The SnRK complex may also be involved in the regulation of fatty acid synthesis by phosphorylation of acetyl-CoA carboxylase and in assimilation of nitrogen by phosphorylating nitrate reductase. In vitro, KIN11 exhibits kinase activity on sucrose phosphate synthase and the kinase activity is inhibited by PRL1. May be a subunit of a SCF ubiquitin ligase complex and thus be involved in proteasomal ubiquitination. Involved in innate antiviral defenses. Phosphorylates REM4.1 in vitro. Phosphorylates ADK2 in vitro. This Arabidopsis thaliana (Mouse-ear cress) protein is SNF1-related protein kinase catalytic subunit alpha KIN11.